The chain runs to 256 residues: Complex I assembly factor TIMMDC1, mitochondrial (256 aa).

The interval 1–27 (MAQSDPPKSPDPPLPTSIRNPQTPESG) is disordered. 2 consecutive transmembrane segments (helical) span residues 111 to 131 (WGWR…GLTV) and 159 to 179 (VGLL…GALI).

The protein belongs to the Tim17/Tim22/Tim23 family. In terms of assembly, associates with the intermediate 315 kDa subcomplex of incompletely assembled complex I.

Its subcellular location is the mitochondrion membrane. Functionally, chaperone protein involved in the assembly of the mitochondrial NADH:ubiquinone oxidoreductase complex (complex I). Participates in constructing the membrane arm of complex I. The chain is Complex I assembly factor TIMMDC1, mitochondrial (timmdc1) from Xenopus laevis (African clawed frog).